The following is a 473-amino-acid chain: Photosystem II CP43 reaction center protein (473 aa).

Positions 1–14 (MKTLYSLRRFYHVE) are excised as a propeptide. An N-acetylthreonine modification is found at T15. T15 carries the post-translational modification Phosphothreonine. 5 helical membrane passes run 69 to 93 (LFEV…PHLA), 134 to 155 (LLGP…KDRN), 178 to 200 (KALY…RKIT), 255 to 275 (KPFA…LSYS), and 291 to 312 (WFNN…ASQA). Residue E367 participates in [CaMn4O5] cluster binding. A helical transmembrane segment spans residues 447 to 471 (RARAAAAGFEKGIDRDFEPVLSMTP).

Belongs to the PsbB/PsbC family. PsbC subfamily. PSII is composed of 1 copy each of membrane proteins PsbA, PsbB, PsbC, PsbD, PsbE, PsbF, PsbH, PsbI, PsbJ, PsbK, PsbL, PsbM, PsbT, PsbX, PsbY, PsbZ, Psb30/Ycf12, at least 3 peripheral proteins of the oxygen-evolving complex and a large number of cofactors. It forms dimeric complexes. Binds multiple chlorophylls and provides some of the ligands for the Ca-4Mn-5O cluster of the oxygen-evolving complex. It may also provide a ligand for a Cl- that is required for oxygen evolution. PSII binds additional chlorophylls, carotenoids and specific lipids. is required as a cofactor.

It is found in the plastid. Its subcellular location is the chloroplast thylakoid membrane. Its function is as follows. One of the components of the core complex of photosystem II (PSII). It binds chlorophyll and helps catalyze the primary light-induced photochemical processes of PSII. PSII is a light-driven water:plastoquinone oxidoreductase, using light energy to abstract electrons from H(2)O, generating O(2) and a proton gradient subsequently used for ATP formation. The protein is Photosystem II CP43 reaction center protein of Manihot esculenta (Cassava).